Reading from the N-terminus, the 446-residue chain is MSSISTESSSNLSLLENGGGGSDKPTAETSRRVRRTVSASSLIRKRSDLKLISRVRWEFMRRILTNLQEVLLGTKLFILFPAVPLAVVAHRYDCPRAWVFALSLLGLTPLAERISFLTEQIAFHTGPTVGGLMNATCGNATEMIIAILAVGQRKMRIVKLSLLGSILSNLLFVLGTSLFLGGISNLRKHQSFDPRQGDMNSMLLYLALLCQTLPMIMRFTMEAEEYDGSDVVVLSRASSFVMLIAYLAFLIFHLFSSHLSPPPPPLPQREDVHDDDVSDKEEEGAVIGMWSAIFWLIIMTLLVALLSDYLVSTIQDAADSWGLSVGFIGIILLPIVGNAAEHAGAVIFAFRNKLDITLGIALGSATQIALFVVPVTVLVAWTMGIEMDLNFNLLETACFALSILVTSLVLQDGTSNYMKGLVLLLCYVVIAACFFVSNSPSSKLLF.

Residues 1–16 are compositionally biased toward low complexity; the sequence is MSSISTESSSNLSLLE. The tract at residues 1 to 33 is disordered; the sequence is MSSISTESSSNLSLLENGGGGSDKPTAETSRRV. Over 1–69 the chain is Cytoplasmic; sequence MSSISTESSS…MRRILTNLQE (69 aa). Residues 70–90 traverse the membrane as a helical segment; that stretch reads VLLGTKLFILFPAVPLAVVAH. Over 91-96 the chain is Extracellular; the sequence is RYDCPR. Residues 97-117 form a helical membrane-spanning segment; it reads AWVFALSLLGLTPLAERISFL. The Cytoplasmic portion of the chain corresponds to 118 to 128; sequence TEQIAFHTGPT. The helical transmembrane segment at 129–149 threads the bilayer; sequence VGGLMNATCGNATEMIIAILA. The cation selection stretch occupies residues 138-173; it reads GNATEMIIAILAVGQRKMRIVKLSLLGSILSNLLFV. Residues 150–162 lie on the Extracellular side of the membrane; that stretch reads VGQRKMRIVKLSL. The chain crosses the membrane as a helical span at residues 163 to 183; sequence LGSILSNLLFVLGTSLFLGGI. Residues 184–196 lie on the Cytoplasmic side of the membrane; the sequence is SNLRKHQSFDPRQ. Residues 197 to 217 traverse the membrane as a helical segment; it reads GDMNSMLLYLALLCQTLPMIM. At 218 to 238 the chain is on the extracellular side; it reads RFTMEAEEYDGSDVVVLSRAS. The helical transmembrane segment at 239 to 259 threads the bilayer; it reads SFVMLIAYLAFLIFHLFSSHL. Topologically, residues 260–285 are cytoplasmic; the sequence is SPPPPPLPQREDVHDDDVSDKEEEGA. The helical transmembrane segment at 286 to 306 threads the bilayer; that stretch reads VIGMWSAIFWLIIMTLLVALL. Residues 307 to 319 lie on the Extracellular side of the membrane; sequence SDYLVSTIQDAAD. A helical membrane pass occupies residues 320–340; that stretch reads SWGLSVGFIGIILLPIVGNAA. Residues 337-372 are cation selection; that stretch reads GNAAEHAGAVIFAFRNKLDITLGIALGSATQIALFV. The Cytoplasmic portion of the chain corresponds to 341 to 359; that stretch reads EHAGAVIFAFRNKLDITLG. Residues 360-380 traverse the membrane as a helical segment; it reads IALGSATQIALFVVPVTVLVA. Topologically, residues 381–388 are extracellular; sequence WTMGIEMD. A helical transmembrane segment spans residues 389-409; it reads LNFNLLETACFALSILVTSLV. At 410-416 the chain is on the cytoplasmic side; the sequence is LQDGTSN. Residues 417-437 form a helical membrane-spanning segment; it reads YMKGLVLLLCYVVIAACFFVS. Topologically, residues 438 to 446 are extracellular; sequence NSPSSKLLF.

This sequence belongs to the Ca(2+):cation antiporter (CaCA) (TC 2.A.19) family. Cation/proton exchanger (CAX) subfamily. As to expression, expressed at low levels in all tissues.

It is found in the vacuole membrane. Functionally, vacuolar cation/proton exchanger (CAX). Translocates Ca(2+) and other metal ions into vacuoles using the proton gradient formed by H(+)-ATPase and H(+)-pyrophosphatase. Cation selectivity transport in tobacco root tonoplast vesicles is Cd(2+)&gt;Zn(2+)&gt;&gt;Ca(2+)&gt;&gt;&gt;Mn(2+). The protein is Vacuolar cation/proton exchanger 4 (CAX4) of Arabidopsis thaliana (Mouse-ear cress).